We begin with the raw amino-acid sequence, 143 residues long: Transthyretin-like protein 33 (143 aa).

Residues 1–20 form the signal peptide; it reads MSRLACISSLFILCAIGSEA.

This sequence belongs to the nematode transthyretin-like family. Expressed in head cells next to and anterior of the first pharyngeal bulb, the pharynx, and the hypodermis.

Its subcellular location is the secreted. Functionally, protects dopaminergic neurons from degeneration caused by oxidative stress. The polypeptide is Transthyretin-like protein 33 (Caenorhabditis elegans).